The sequence spans 1012 residues: DNA polymerase gamma (1012 aa).

It belongs to the DNA polymerase type-A family. Requires Mg(2+) as cofactor.

The protein localises to the mitochondrion. It catalyses the reaction DNA(n) + a 2'-deoxyribonucleoside 5'-triphosphate = DNA(n+1) + diphosphate. Its function is as follows. Involved in the replication of mitochondrial DNA. This is DNA polymerase gamma (MIP1) from Komagataella pastoris (Yeast).